The following is a 357-amino-acid chain: MAGNSIGQYFKVTTFGESHGPAIGGIIDGVPPGLSLNAQDIQFDLNRRRPGTSRYTSPRSEPDIVEILSGVFNEKTTGTSIGLIIKNIDQRSQDYEEIKNLYRPGHADYTYEKKYGLRDYRGGGRSSARETAIRVAAGAIAKKYLYKINKINIRAYLKQIGHIHCDFKDWIYVNNNPFFCPNPEQITELDLFIRNLKKLGNSVGAKVTIIAENLPIGLGEPVFDRLDADLAHALMSINAVKGIEIGDGFSAITKLGSEYRDEITSQGFQSNHSGGILGGISTGQPIIMHIAIKPTSSIKIPGKTVTNHNQETQIITTGRHDPCIGIRIIPIAEAMVAIILMDHILRFRAQCGDRKII.

NADP(+) contacts are provided by R48 and R54. FMN-binding positions include 125–127 (RSS), 238–239 (NA), G278, 293–297 (KPTSS), and R319.

This sequence belongs to the chorismate synthase family. As to quaternary structure, homotetramer. FMNH2 is required as a cofactor.

It catalyses the reaction 5-O-(1-carboxyvinyl)-3-phosphoshikimate = chorismate + phosphate. It participates in metabolic intermediate biosynthesis; chorismate biosynthesis; chorismate from D-erythrose 4-phosphate and phosphoenolpyruvate: step 7/7. Its function is as follows. Catalyzes the anti-1,4-elimination of the C-3 phosphate and the C-6 proR hydrogen from 5-enolpyruvylshikimate-3-phosphate (EPSP) to yield chorismate, which is the branch point compound that serves as the starting substrate for the three terminal pathways of aromatic amino acid biosynthesis. This reaction introduces a second double bond into the aromatic ring system. The chain is Chorismate synthase from Blochmanniella floridana.